The sequence spans 475 residues: Ribulose bisphosphate carboxylase large chain (475 aa).

Positions 1-2 (MS) are excised as a propeptide. N-acetylproline is present on P3. The residue at position 14 (K14) is an N6,N6,N6-trimethyllysine. 2 residues coordinate substrate: N123 and T173. K175 functions as the Proton acceptor in the catalytic mechanism. Residue K177 coordinates substrate. Mg(2+) is bound by residues K201, D203, and E204. The residue at position 201 (K201) is an N6-carboxylysine. H294 serves as the catalytic Proton acceptor. The substrate site is built by R295, H327, and S379.

This sequence belongs to the RuBisCO large chain family. Type I subfamily. In terms of assembly, heterohexadecamer of 8 large chains and 8 small chains; disulfide-linked. The disulfide link is formed within the large subunit homodimers. The cofactor is Mg(2+). In terms of processing, the disulfide bond which can form in the large chain dimeric partners within the hexadecamer appears to be associated with oxidative stress and protein turnover.

The protein localises to the plastid. It localises to the chloroplast. It carries out the reaction 2 (2R)-3-phosphoglycerate + 2 H(+) = D-ribulose 1,5-bisphosphate + CO2 + H2O. The catalysed reaction is D-ribulose 1,5-bisphosphate + O2 = 2-phosphoglycolate + (2R)-3-phosphoglycerate + 2 H(+). RuBisCO catalyzes two reactions: the carboxylation of D-ribulose 1,5-bisphosphate, the primary event in carbon dioxide fixation, as well as the oxidative fragmentation of the pentose substrate in the photorespiration process. Both reactions occur simultaneously and in competition at the same active site. This chain is Ribulose bisphosphate carboxylase large chain, found in Platanus occidentalis (Sycamore).